We begin with the raw amino-acid sequence, 118 residues long: DNA-binding protein Msp_0595 (118 aa).

Low complexity predominate over residues 15-44 (LKQQQLAAQQQQGASLEQMQQEEQARQQFE). The tract at residues 15-45 (LKQQQLAAQQQQGASLEQMQQEEQARQQFEN) is disordered.

This sequence belongs to the PDCD5 family.

This Methanosphaera stadtmanae (strain ATCC 43021 / DSM 3091 / JCM 11832 / MCB-3) protein is DNA-binding protein Msp_0595.